Here is an 89-residue protein sequence, read N- to C-terminus: Conotoxin Bu5 (89 aa).

The signal sequence occupies residues 1–22; the sequence is MKLTCVLIVAVLFLTACQLATA. A propeptide spanning residues 23 to 49 is cleaved from the precursor; it reads ENSREEQGYSAVRSSDQIQDSDLKLTK. Disulfide bonds link Cys51-Cys66, Cys58-Cys70, and Cys65-Cys79. At Cys79 the chain carries Cysteine amide. The propeptide occupies 80–89; it reads GVSIDYYDSR.

This sequence belongs to the conotoxin O1 superfamily. Expressed by the venom duct.

It localises to the secreted. In Conus bullatus (Bubble cone), this protein is Conotoxin Bu5.